A 618-amino-acid polypeptide reads, in one-letter code: UvrABC system protein C (618 aa).

Positions 13–92 (DKPGVYLMKN…IKKYRPKYNI (80 aa)) constitute a GIY-YIG domain. One can recognise a UVR domain in the interval 204–239 (LDIVENFKLNMERAAENLEFEKAAMLRDKINIIEKI).

It belongs to the UvrC family. In terms of assembly, interacts with UvrB in an incision complex.

Its subcellular location is the cytoplasm. Functionally, the UvrABC repair system catalyzes the recognition and processing of DNA lesions. UvrC both incises the 5' and 3' sides of the lesion. The N-terminal half is responsible for the 3' incision and the C-terminal half is responsible for the 5' incision. This chain is UvrABC system protein C, found in Clostridium botulinum (strain Langeland / NCTC 10281 / Type F).